Consider the following 431-residue polypeptide: Glucose-1-phosphate adenylyltransferase (431 aa).

K39 contributes to the beta-D-fructose 1,6-bisphosphate binding site. R40, H46, and R52 together coordinate AMP. Y114 contacts alpha-D-glucose 1-phosphate. R130 contacts AMP. Alpha-D-glucose 1-phosphate contacts are provided by residues G179, E194 to K195, and S212. R386 lines the AMP pocket. Beta-D-fructose 1,6-bisphosphate is bound at residue Q429–R431.

This sequence belongs to the bacterial/plant glucose-1-phosphate adenylyltransferase family. Homotetramer.

The enzyme catalyses alpha-D-glucose 1-phosphate + ATP + H(+) = ADP-alpha-D-glucose + diphosphate. It participates in glycan biosynthesis; glycogen biosynthesis. Its activity is regulated as follows. Allosterically activated by fructose-1,6-bisphosphate (F16BP) and inhibited by AMP. Its function is as follows. Involved in the biosynthesis of ADP-glucose, a building block required for the elongation reactions to produce glycogen. Catalyzes the reaction between ATP and alpha-D-glucose 1-phosphate (G1P) to produce pyrophosphate and ADP-Glc. In Klebsiella pneumoniae (strain 342), this protein is Glucose-1-phosphate adenylyltransferase.